A 255-amino-acid polypeptide reads, in one-letter code: DNA polymerase epsilon subunit C (255 aa).

The segment at lysine 109–glycine 255 is disordered. The segment covering methionine 135 to glutamate 156 has biased composition (acidic residues). Over residues lysine 171–lysine 184 the composition is skewed to low complexity. Composition is skewed to acidic residues over residues threonine 199 to proline 219 and aspartate 236 to glycine 255.

As to quaternary structure, heterotetramer. Consists of four subunits: POL2, DPB2, DPB3 and DPB4.

It is found in the nucleus. As accessory component of the DNA polymerase epsilon (DNA polymerase II) participates in chromosomal DNA replication. The chain is DNA polymerase epsilon subunit C (DPB3) from Candida glabrata (strain ATCC 2001 / BCRC 20586 / JCM 3761 / NBRC 0622 / NRRL Y-65 / CBS 138) (Yeast).